The primary structure comprises 149 residues: Macrodomain Ter protein (149 aa).

Belongs to the MatP family. In terms of assembly, homodimer.

The protein localises to the cytoplasm. In terms of biological role, required for spatial organization of the terminus region of the chromosome (Ter macrodomain) during the cell cycle. Prevents early segregation of duplicated Ter macrodomains during cell division. Binds specifically to matS, which is a 13 bp signature motif repeated within the Ter macrodomain. This is Macrodomain Ter protein from Vibrio parahaemolyticus serotype O3:K6 (strain RIMD 2210633).